The sequence spans 248 residues: Mannose-binding protein C (248 aa).

The signal sequence occupies residues methionine 1 to serine 20. The region spanning glycine 42–glutamate 99 is the Collagen-like domain. Positions isoleucine 43–lysine 113 are disordered. The residue at position 47 (proline 47) is a 4-hydroxyproline. Over residues lysine 49–glutamate 61 the composition is skewed to basic and acidic residues. Proline 73, proline 79, proline 82, and proline 88 each carry 4-hydroxyproline. Positions proline 82–lysine 91 are enriched in low complexity. Residues arginine 112–leucine 130 are a coiled coil. The C-type lectin domain maps to valine 134–glutamate 245. 2 cysteine pairs are disulfide-bonded: cysteine 155–cysteine 244 and cysteine 222–cysteine 236.

Oligomeric complex of 3 or more homotrimers. Interacts with MASP1 and MASP2. Interacts with MEP1A and MEP1B and may inhibit their catalytic activity. Hydroxylation on proline residues within the sequence motif, GXPG, is most likely to be 4-hydroxy as this fits the requirement for 4-hydroxylation in vertebrates.

It localises to the secreted. In terms of biological role, calcium-dependent lectin involved in innate immune defense. Binds mannose, fucose and N-acetylglucosamine on different microorganisms and activates the lectin complement pathway. Binds to late apoptotic cells, as well as to apoptotic blebs and to necrotic cells, but not to early apoptotic cells, facilitating their uptake by macrophages. The protein is Mannose-binding protein C (MBL2) of Chlorocebus aethiops (Green monkey).